The sequence spans 208 residues: MSNGFQMPTSRYVLPSFIEQSAYGTKETNPYAKLFEERIIFLGTQVDDTSANDIMAQLLVLEGMDPDRDITLYINSPGGSFTALMAIYDTMQYVRPDVQTVCLGQAASAAAVLLAAGAPGKRAVLPNSRVLIHQPATQGTQGQVSDLEIQAAEIERMRRLMETTLAEHTGKTAEQIRIDTDRDKILTAEEALEYGIVDQVFDYRKLKR.

S108 functions as the Nucleophile in the catalytic mechanism. H133 is an active-site residue.

Belongs to the peptidase S14 family. In terms of assembly, fourteen ClpP subunits assemble into 2 heptameric rings which stack back to back to give a disk-like structure with a central cavity, resembling the structure of eukaryotic proteasomes.

Its subcellular location is the cytoplasm. It carries out the reaction Hydrolysis of proteins to small peptides in the presence of ATP and magnesium. alpha-casein is the usual test substrate. In the absence of ATP, only oligopeptides shorter than five residues are hydrolyzed (such as succinyl-Leu-Tyr-|-NHMec, and Leu-Tyr-Leu-|-Tyr-Trp, in which cleavage of the -Tyr-|-Leu- and -Tyr-|-Trp bonds also occurs).. Its function is as follows. Cleaves peptides in various proteins in a process that requires ATP hydrolysis. Has a chymotrypsin-like activity. Plays a major role in the degradation of misfolded proteins. This Corynebacterium glutamicum (strain ATCC 13032 / DSM 20300 / JCM 1318 / BCRC 11384 / CCUG 27702 / LMG 3730 / NBRC 12168 / NCIMB 10025 / NRRL B-2784 / 534) protein is ATP-dependent Clp protease proteolytic subunit 1.